The following is a 348-amino-acid chain: Dihydroorotase (348 aa).

Zn(2+)-binding residues include His17 and His19. Residues 19–21 (HLR) and Asn45 each bind substrate. Lys103, His140, and His178 together coordinate Zn(2+). Residue Lys103 is modified to N6-carboxylysine. A substrate-binding site is contributed by His140. Leu223 is a substrate binding site. Asp251 serves as a coordination point for Zn(2+). Asp251 is a catalytic residue. 2 residues coordinate substrate: His255 and Ala267.

It belongs to the metallo-dependent hydrolases superfamily. DHOase family. Class II DHOase subfamily. In terms of assembly, homodimer. Zn(2+) serves as cofactor.

The catalysed reaction is (S)-dihydroorotate + H2O = N-carbamoyl-L-aspartate + H(+). It functions in the pathway pyrimidine metabolism; UMP biosynthesis via de novo pathway; (S)-dihydroorotate from bicarbonate: step 3/3. Catalyzes the reversible cyclization of carbamoyl aspartate to dihydroorotate. The sequence is that of Dihydroorotase from Escherichia coli (strain UTI89 / UPEC).